The following is a 186-amino-acid chain: HTH-type transcriptional regulator Hpr (186 aa).

The HTH marR-type domain maps to 13-157 (AMLYSQRIAQ…VMAVIRNIYG (145 aa)). The segment at residues 63–86 (ISDVAKFGVMHVSTAFNFSKKLEE) is a DNA-binding region (H-T-H motif).

Homodimer.

Negative regulator of protease production and sporulation. This is HTH-type transcriptional regulator Hpr from Lysinibacillus sphaericus (strain C3-41).